Reading from the N-terminus, the 249-residue chain is Aquaporin TIP2-1 (249 aa).

2 helical membrane-spanning segments follow: residues 20-40 (AYVAEFIATLLFVFAGVGSAI) and 54-74 (AGLVAIAIAHALALFVGVSVA). Positions 83–85 (NPA) match the NPA 1 motif. 3 consecutive transmembrane segments (helical) span residues 102–122 (VFYWVAQLLGATVACLLLGFV), 141–161 (GVVFEVVITFALVYTVYATAA), and 168–188 (LGTIAPIAIGFIVGANILAAG). The NPA 2 signature appears at 196 to 198 (NPA). A helical transmembrane segment spans residues 217 to 237 (WVGPLVGGGLAGLVYGDVFIG).

It belongs to the MIP/aquaporin (TC 1.A.8) family. TIP (TC 1.A.8.10) subfamily.

It is found in the vacuole membrane. Functionally, aquaporins facilitate the transport of water and small neutral solutes across cell membranes. In Zea mays (Maize), this protein is Aquaporin TIP2-1 (TIP2-1).